The following is a 324-amino-acid chain: Protoheme IX farnesyltransferase (324 aa).

9 consecutive transmembrane segments (helical) span residues 31 to 51 (LIVLFLITTAAGMWVAARGEV), 53 to 73 (PVLALITLLTGAMAAGSANTI), 104 to 124 (LVFAIALAVGAFSLQTLCANL), 125 to 145 (LSACLEMAGIAVYVGVYTHWL), 153 to 173 (IVIGGAAGAIPPLVGWAAVTG), 181 to 201 (VLFAIIFIWTPPHFWPLAMLI), 222 to 242 (TAWQIFGYTLVLLPTTLLLVY), 243 to 263 (PLHACGLIYGAIALVLGVVFI), and 285 to 305 (FSILYMMILCAAMGIDSLPLT).

This sequence belongs to the UbiA prenyltransferase family. Protoheme IX farnesyltransferase subfamily.

Its subcellular location is the cell inner membrane. The catalysed reaction is heme b + (2E,6E)-farnesyl diphosphate + H2O = Fe(II)-heme o + diphosphate. It functions in the pathway porphyrin-containing compound metabolism; heme O biosynthesis; heme O from protoheme: step 1/1. Converts heme B (protoheme IX) to heme O by substitution of the vinyl group on carbon 2 of heme B porphyrin ring with a hydroxyethyl farnesyl side group. The chain is Protoheme IX farnesyltransferase from Cyanothece sp. (strain PCC 7425 / ATCC 29141).